Here is a 185-residue protein sequence, read N- to C-terminus: MIDEALFDAEEKMEKAVAVARDDLSTIRTGRANPGMFSRITIDYYGAATPITQLASINVPEARLVVIKPYEANQLRAIETAIRNSDLGVNPTNDGALIRVAVPQLTEERRRELVKQAKHKGEEAKVSVRNIRRKAMEELHRIRKEGEAGEDEVGRAEKDLDKTTHQYVTQIDELVKHKEGELLEV.

Residues 144–164 form a disordered region; that stretch reads KEGEAGEDEVGRAEKDLDKTT.

Belongs to the RRF family.

It is found in the cytoplasm. Its function is as follows. Responsible for the release of ribosomes from messenger RNA at the termination of protein biosynthesis. May increase the efficiency of translation by recycling ribosomes from one round of translation to another. The protein is Ribosome-recycling factor of Mycobacterium tuberculosis (strain CDC 1551 / Oshkosh).